Reading from the N-terminus, the 561-residue chain is uncharacterized protein (561 aa).

The next 2 helical transmembrane spans lie at 29 to 49 and 80 to 100; these read FIFN…KKII and FLFH…AVVI.

Its subcellular location is the cell membrane. This is an uncharacterized protein from Mycoplasma pneumoniae (strain ATCC 29342 / M129 / Subtype 1) (Mycoplasmoides pneumoniae).